A 1087-amino-acid polypeptide reads, in one-letter code: Alpha-mannosidase G (1087 aa).

Zn(2+)-binding residues include H264, D266, D376, and H579. The active-site Nucleophile is the D376.

It belongs to the glycosyl hydrolase 38 family. Zn(2+) is required as a cofactor.

The catalysed reaction is Hydrolysis of terminal, non-reducing alpha-D-mannose residues in alpha-D-mannosides.. In Dictyostelium discoideum (Social amoeba), this protein is Alpha-mannosidase G (manG).